The primary structure comprises 397 residues: Succinate--CoA ligase [ADP-forming] subunit beta (397 aa).

In terms of domain architecture, ATP-grasp spans 9–254; it reads KALLREFGVP…ESEEDAKEIE (246 aa). Residues Lys-46, 53–55, Glu-109, Ser-112, and Glu-117 contribute to the ATP site; that span reads GRG. The Mg(2+) site is built by Asn-209 and Asp-223. Substrate is bound by residues Asn-274 and 331 to 333; that span reads GIM.

Belongs to the succinate/malate CoA ligase beta subunit family. As to quaternary structure, heterotetramer of two alpha and two beta subunits. Mg(2+) is required as a cofactor.

It catalyses the reaction succinate + ATP + CoA = succinyl-CoA + ADP + phosphate. The enzyme catalyses GTP + succinate + CoA = succinyl-CoA + GDP + phosphate. It functions in the pathway carbohydrate metabolism; tricarboxylic acid cycle; succinate from succinyl-CoA (ligase route): step 1/1. Its function is as follows. Succinyl-CoA synthetase functions in the citric acid cycle (TCA), coupling the hydrolysis of succinyl-CoA to the synthesis of either ATP or GTP and thus represents the only step of substrate-level phosphorylation in the TCA. The beta subunit provides nucleotide specificity of the enzyme and binds the substrate succinate, while the binding sites for coenzyme A and phosphate are found in the alpha subunit. The polypeptide is Succinate--CoA ligase [ADP-forming] subunit beta (Nitrobacter hamburgensis (strain DSM 10229 / NCIMB 13809 / X14)).